Here is a 196-residue protein sequence, read N- to C-terminus: MKVAKDLVVSLAYQVRTEDGVLVDESPVSAPLDYLHGHGSLISGLETALEGHEVGDKFDVAVGANDAYGQYDENLVQRVPKDVFMGVDELQVGMRFLAETDQGPVPVEITAVEDDHVVVDGNHMLAGQNLKFNVEVVAIREATEEELAHGHVHGAHDHHHDHDHDGCCGGHGHDHGHEHGGEGCCGGKGNGGCGCH.

Positions 1-69 (MKVAKDLVVS…VAVGANDAYG (69 aa)) are PPIase first part. In terms of domain architecture, PPIase FKBP-type spans 1 to 95 (MKVAKDLVVS…GVDELQVGMR (95 aa)). An IF-chaperone region spans residues 76 to 120 (VQRVPKDVFMGVDELQVGMRFLAETDQGPVPVEITAVEDDHVVVD). The tract at residues 129 to 151 (NLKFNVEVVAIREATEEELAHGH) is PPIase second part. Ni(2+) is bound by residues cysteine 167, cysteine 168, cysteine 184, cysteine 185, cysteine 193, and cysteine 195.

This sequence belongs to the FKBP-type PPIase family. As to quaternary structure, monomer. Binds to a broad range of unrelated Tat signal sequences. Interacts with the hydrogenase nickel incorporation protein HypB.

It localises to the cytoplasm. The enzyme catalyses [protein]-peptidylproline (omega=180) = [protein]-peptidylproline (omega=0). Its function is as follows. Folding helper with both chaperone and peptidyl-prolyl cis-trans isomerase (PPIase) activities. Chaperone activity prevents aggregation of unfolded or partially folded proteins and promotes their correct folding. PPIases catalyze the cis-trans isomerization of Xaa-Pro bonds of peptides, which accelerates slow steps of protein folding and thus shortens the lifetime of intermediates. Both strategies lower the concentration of intermediates and increase the productivity and yield of the folding reaction. SlyD could be involved in Tat-dependent translocation, by binding to the Tat-type signal of folded proteins. In terms of biological role, also involved in hydrogenase metallocenter assembly, probably by participating in the nickel insertion step. This function in hydrogenase biosynthesis requires chaperone activity and the presence of the metal-binding domain, but not PPIase activity. In Escherichia coli O157:H7, this protein is FKBP-type peptidyl-prolyl cis-trans isomerase SlyD (slyD).